A 435-amino-acid polypeptide reads, in one-letter code: Kynurenine--oxoglutarate transaminase (435 aa).

2 residues coordinate substrate: G46 and N198. Residue K262 is modified to N6-(pyridoxal phosphate)lysine. R413 serves as a coordination point for substrate.

Belongs to the class-I pyridoxal-phosphate-dependent aminotransferase family. As to quaternary structure, homodimer. It depends on pyridoxal 5'-phosphate as a cofactor.

The protein localises to the cytoplasm. It carries out the reaction L-kynurenine + 2-oxoglutarate = kynurenate + L-glutamate + H2O. The enzyme catalyses 3-phenylpyruvate + L-glutamine = 2-oxoglutaramate + L-phenylalanine. It catalyses the reaction an S-substituted L-cysteine + H2O = a thiol + pyruvate + NH4(+). It participates in amino-acid degradation; L-kynurenine degradation; kynurenate from L-kynurenine: step 1/2. Its function is as follows. Catalyzes the irreversible transamination of the L-tryptophan metabolite L-kynurenine to form kynurenic acid (KA). Metabolizes the cysteine conjugates of certain halogenated alkenes and alkanes to form reactive metabolites. Catalyzes the beta-elimination of S-conjugates and Se-conjugates of L-(seleno)cysteine, resulting in the cleavage of the C-S or C-Se bond. This chain is Kynurenine--oxoglutarate transaminase (ccbl), found in Dictyostelium discoideum (Social amoeba).